The following is a 413-amino-acid chain: S-adenosylmethionine synthase (413 aa).

Histidine 15 contributes to the ATP binding site. Aspartate 17 contributes to the Mg(2+) binding site. K(+) is bound at residue glutamate 43. L-methionine-binding residues include glutamate 56 and glutamine 100. The flexible loop stretch occupies residues 100-110 (QSPDISQGVNE). ATP-binding positions include 171–173 (DGK), 248–249 (KF), aspartate 257, 263–264 (RK), alanine 280, and lysine 284. Aspartate 257 contributes to the L-methionine binding site. L-methionine is bound at residue lysine 288.

This sequence belongs to the AdoMet synthase family. Homotetramer; dimer of dimers. Mg(2+) serves as cofactor. K(+) is required as a cofactor.

The protein resides in the cytoplasm. The enzyme catalyses L-methionine + ATP + H2O = S-adenosyl-L-methionine + phosphate + diphosphate. It participates in amino-acid biosynthesis; S-adenosyl-L-methionine biosynthesis; S-adenosyl-L-methionine from L-methionine: step 1/1. Functionally, catalyzes the formation of S-adenosylmethionine (AdoMet) from methionine and ATP. The overall synthetic reaction is composed of two sequential steps, AdoMet formation and the subsequent tripolyphosphate hydrolysis which occurs prior to release of AdoMet from the enzyme. This is S-adenosylmethionine synthase from Prochlorococcus marinus subsp. pastoris (strain CCMP1986 / NIES-2087 / MED4).